The chain runs to 79 residues: Sec-independent protein translocase protein TatA (79 aa).

Residues 1–21 (MGSLSIWHWIVVIAVILLLFG) form a helical membrane-spanning segment. Residues 43 to 60 (MQDDEKTAEKPEPVKTID) show a composition bias toward basic and acidic residues. The segment at 43 to 79 (MQDDEKTAEKPEPVKTIDHNAPAPGASRSDVGSKTTV) is disordered.

This sequence belongs to the TatA/E family. The Tat system comprises two distinct complexes: a TatABC complex, containing multiple copies of TatA, TatB and TatC subunits, and a separate TatA complex, containing only TatA subunits. Substrates initially bind to the TatABC complex, which probably triggers association of the separate TatA complex to form the active translocon.

Its subcellular location is the cell inner membrane. In terms of biological role, part of the twin-arginine translocation (Tat) system that transports large folded proteins containing a characteristic twin-arginine motif in their signal peptide across membranes. TatA could form the protein-conducting channel of the Tat system. The polypeptide is Sec-independent protein translocase protein TatA (Nitrobacter hamburgensis (strain DSM 10229 / NCIMB 13809 / X14)).